Reading from the N-terminus, the 123-residue chain is Large ribosomal subunit protein uL29 (123 aa).

N6-acetyllysine is present on lysine 19. Residue lysine 25 forms a Glycyl lysine isopeptide (Lys-Gly) (interchain with G-Cter in SUMO2) linkage. Serine 29 carries the post-translational modification Phosphoserine. Lysine 43 carries the N6-acetyllysine modification. A disordered region spans residues 100 to 123 (EKLKTKKQQRKERLYPLRKYAVKA).

This sequence belongs to the universal ribosomal protein uL29 family. In terms of assembly, component of the large ribosomal subunit.

It localises to the cytoplasm. Component of the large ribosomal subunit. The ribosome is a large ribonucleoprotein complex responsible for the synthesis of proteins in the cell. The polypeptide is Large ribosomal subunit protein uL29 (Rpl35) (Mus musculus (Mouse)).